The following is a 1125-amino-acid chain: MSSSRPSHSSSNSARSRHSARIIAQTTVDAKLHADFEESGSSFDYSSSVRVTDSVGGDQPPRSDKVTTAYLHHIQKGKLIQPFGCLLALDEKTFRVVAYSENAPELLTMVSHAVPSVGEHPVLGIGTDIRTIFTAPSASALQKAMGFGDVSLLNPILVHCKTSGKPFYAIVHRVTGSLIIDFEPVKPYEVPMTAAGALQSYKLAAKAITRLQSLPSGSMERLCDTMVQEVFELTGYDRAMAYKFHDDDHGEVVSEVTKPGMEPYLGLHYPATDIPQASRFLFMKNKVRMIVDCHAKHVKVLQDEKLPFDLTLCGSTLRAPHSCHLQYMENMNSIASLVMAVVVNDGDEDGDTPDSANPQKRKRLWGLVVCHNTSPRFVPFPLRYACEFLAQVFAIHVNKELELENQIVEKNILRTQTLLCDMLMRDAPLGIVTQSPNIMDLVKCDGAVLFYRNKIWRLGITPSDLQLQDIAFWLSEYHMDSTGLSTDSLYDAGYPGALALGDVVCGMAAVRITSKDMLFWFRSQTAAEIRWGGAKHEPGEKDDGRRMHPRSSFKAFLEVVKTRSLPWKDYEMDAIHSLQLILRNTFKDIETMDVDTKTIHARLSDLKIEGMQELEAVTSEMVRLIETATVPILAVDVDGLVNGWNTKISELTGLLVDKAIGKHLLTLVEDSSVDIVKRMLFLALQGKEEQNIQFEIKTHGSKSECGPICLVVNACASRDLHENVVGVCFVGQDITGQKMVMDKFTRIEGDYKAIVQNRNPLIPPIFGTDEFGWCSEWNPAMTNLTGWKREEVLDKMLLGEVFGLNMACCRLKNQEAFVNLGVVLNTAMTGQESEKVSFGFFARTGKYVECLLCVSKKLDREGAVTGVFCFLQLASQELQQALHVQRLSEQTALKRLKALAYLKKQIWNPLSGIIFSGKMMEGTELGAEQKELLHTSAQCQCQLSKILDDSDLDSIIEGYLDLEMVEFTLREYYGCYQSSHDEKHEKGIPIINDALKMAETLYGDSIRLQQVLADFCRCQLILTPSGGLLTVSASFFQRPVGAILFILVHSGKLRIRHLGAGIPEALVDQMYGEDTGASVEGISLVISRKLVKLMNGDVRYMREAGKSSFIISVELAGGHKSQKRA.

Composition is skewed to low complexity over residues 1 to 14 (MSSSRPSHSSSNSA) and 39 to 48 (SGSSFDYSSS). 2 disordered regions span residues 1-22 (MSSSRPSHSSSNSARSRHSARI) and 38-64 (ESGSSFDYSSSVRVTDSVGGDQPPRSD). The region spanning 218–401 (SMERLCDTMV…VFAIHVNKEL (184 aa)) is the GAF domain. Phytochromobilin is bound at residue Cys-323. 2 consecutive PAS domains span residues 617-687 (VTSE…LQGK) and 750-821 (DYKA…VNLG). Residues 901–1117 (YLKKQIWNPL…SFIISVELAG (217 aa)) enclose the Histidine kinase domain.

This sequence belongs to the phytochrome family. In terms of assembly, homodimer. In terms of processing, contains one covalently linked phytochromobilin chromophore.

In terms of biological role, regulatory photoreceptor which exists in two forms that are reversibly interconvertible by light: the Pr form that absorbs maximally in the red region of the spectrum and the Pfr form that absorbs maximally in the far-red region. Photoconversion of Pr to Pfr induces an array of morphogenic responses, whereas reconversion of Pfr to Pr cancels the induction of those responses. Pfr controls the expression of a number of nuclear genes including those encoding the small subunit of ribulose-bisphosphate carboxylase, chlorophyll A/B binding protein, protochlorophyllide reductase, rRNA, etc. It also controls the expression of its own gene(s) in a negative feedback fashion. The protein is Phytochrome A (PHYA) of Populus tremuloides (Quaking aspen).